Consider the following 370-residue polypeptide: tRNA (guanine(9)-/adenine(9)-N1)-methyltransferase (370 aa).

Residues 87-292 (TPEELREKLP…KELPKRATRY (206 aa)) enclose the SAM-dependent MTase TRM10-type domain.

The protein belongs to the class IV-like SAM-binding methyltransferase superfamily. TRM10 family.

Its subcellular location is the cytoplasm. It catalyses the reaction adenosine(9) in tRNA + S-adenosyl-L-methionine = N(1)-methyladenosine(9) in tRNA + S-adenosyl-L-homocysteine + H(+). The catalysed reaction is guanosine(9) in tRNA + S-adenosyl-L-methionine = N(1)-methylguanosine(9) in tRNA + S-adenosyl-L-homocysteine + H(+). Functionally, catalyzes the S-adenosyl-L-methionine-dependent formation of either N(1)-methyladenine or N(1)-methylguanine at position 9 (m1A9 or m1G9) in tRNA. The sequence is that of tRNA (guanine(9)-/adenine(9)-N1)-methyltransferase from Thermococcus kodakarensis (strain ATCC BAA-918 / JCM 12380 / KOD1) (Pyrococcus kodakaraensis (strain KOD1)).